The primary structure comprises 72 residues: Large ribosomal subunit protein bL28 (72 aa).

Belongs to the bacterial ribosomal protein bL28 family.

This Chlorobium phaeovibrioides (strain DSM 265 / 1930) (Prosthecochloris vibrioformis (strain DSM 265)) protein is Large ribosomal subunit protein bL28.